The primary structure comprises 174 residues: Crossover junction endodeoxyribonuclease RuvC (174 aa).

Catalysis depends on residues D8, E69, and D141. Mg(2+)-binding residues include D8, E69, and D141.

This sequence belongs to the RuvC family. In terms of assembly, homodimer which binds Holliday junction (HJ) DNA. The HJ becomes 2-fold symmetrical on binding to RuvC with unstacked arms; it has a different conformation from HJ DNA in complex with RuvA. In the full resolvosome a probable DNA-RuvA(4)-RuvB(12)-RuvC(2) complex forms which resolves the HJ. Requires Mg(2+) as cofactor.

It localises to the cytoplasm. It catalyses the reaction Endonucleolytic cleavage at a junction such as a reciprocal single-stranded crossover between two homologous DNA duplexes (Holliday junction).. Its function is as follows. The RuvA-RuvB-RuvC complex processes Holliday junction (HJ) DNA during genetic recombination and DNA repair. Endonuclease that resolves HJ intermediates. Cleaves cruciform DNA by making single-stranded nicks across the HJ at symmetrical positions within the homologous arms, yielding a 5'-phosphate and a 3'-hydroxyl group; requires a central core of homology in the junction. The consensus cleavage sequence is 5'-(A/T)TT(C/G)-3'. Cleavage occurs on the 3'-side of the TT dinucleotide at the point of strand exchange. HJ branch migration catalyzed by RuvA-RuvB allows RuvC to scan DNA until it finds its consensus sequence, where it cleaves and resolves the cruciform DNA. In Xanthomonas oryzae pv. oryzae (strain PXO99A), this protein is Crossover junction endodeoxyribonuclease RuvC.